Consider the following 537-residue polypeptide: Cytochrome P450 monooxygenase alt2 (537 aa).

A helical transmembrane segment spans residues 4–24; the sequence is HLLILAAVVLLIIHIVNNFLI. Position 474 (C474) interacts with heme.

This sequence belongs to the cytochrome P450 family. It depends on heme as a cofactor.

The protein localises to the membrane. Its pathway is secondary metabolite biosynthesis. Functionally, cytochrome P450 monooxygenase; part of the gene cluster that mediates the biosynthesis of alternapyrone derivatives. Alternapyrone is a decaketide with octa-methylation from methionine on every C2 unit except the third unit. All the domains in the polyketide synthase alt5 are apparently involved in alternapyrone synthesis, that is, the 8 CMeT, 7 KR, 7 DH, and 4 ER reactions in the 9 KS-mediated condensation steps required for alternapyrone synthesis. the alternapyrone produced by alt5 might be intensively modified by cytochrome P450 monooxygenases alt1, alt2 and alt3 and FAD-dependent oxidoreductase alt4 present in the alt gene cluster. The polypeptide is Cytochrome P450 monooxygenase alt2 (Alternaria solani).